Here is an 87-residue protein sequence, read N- to C-terminus: Ragulator complex protein LAMTOR4 homolog (87 aa).

This sequence belongs to the LAMTOR4 family. Part of the Ragulator complex.

It localises to the lysosome. Functionally, regulator of the TOR pathway, a signaling cascade that promotes cell growth in response to growth factors, energy levels, and amino acids. As part of the Ragulator complex, may activate the TOR signaling cascade in response to amino acids. The protein is Ragulator complex protein LAMTOR4 homolog of Dictyostelium discoideum (Social amoeba).